A 171-amino-acid polypeptide reads, in one-letter code: 6,7-dimethyl-8-ribityllumazine synthase (171 aa).

Residues Phe-24, 58-60 (ALE), and 82-84 (AVI) each bind 5-amino-6-(D-ribitylamino)uracil. Position 87 to 88 (87 to 88 (ET)) interacts with (2S)-2-hydroxy-3-oxobutyl phosphate. The Proton donor role is filled by His-90. Asn-115 provides a ligand contact to 5-amino-6-(D-ribitylamino)uracil. Arg-129 provides a ligand contact to (2S)-2-hydroxy-3-oxobutyl phosphate. The tract at residues 150–171 (ALDQLGDDEDEEEDEDDEEERA) is disordered. Acidic residues predominate over residues 154–171 (LGDDEDEEEDEDDEEERA).

The protein belongs to the DMRL synthase family.

The catalysed reaction is (2S)-2-hydroxy-3-oxobutyl phosphate + 5-amino-6-(D-ribitylamino)uracil = 6,7-dimethyl-8-(1-D-ribityl)lumazine + phosphate + 2 H2O + H(+). Its pathway is cofactor biosynthesis; riboflavin biosynthesis; riboflavin from 2-hydroxy-3-oxobutyl phosphate and 5-amino-6-(D-ribitylamino)uracil: step 1/2. In terms of biological role, catalyzes the formation of 6,7-dimethyl-8-ribityllumazine by condensation of 5-amino-6-(D-ribitylamino)uracil with 3,4-dihydroxy-2-butanone 4-phosphate. This is the penultimate step in the biosynthesis of riboflavin. The sequence is that of 6,7-dimethyl-8-ribityllumazine synthase from Burkholderia cenocepacia (strain HI2424).